The following is a 142-amino-acid chain: gSG7 salivary protein (142 aa).

Residues 1-25 (METKLVLALIACGVICLLQTTPTEA) form the signal peptide. Intrachain disulfides connect Cys83/Cys138 and Cys106/Cys116.

Interacts with host coagulation factor XII (F12) (inactive and activated). Interacts with host high molecular weight kininogen (KNG1) (inactive and activated).

It localises to the secreted. Zn(2+) modulates binding to host coagulation factor XII (F12) and high molecular weight kininogen (KNG1). In terms of biological role, salivary protein with anticoagulant activity. Inhibits activation of host kallikrein-kinin system by preventing the reciprocal activation of coagulation factor XII (F12) and prekallikrein (KLKB1), and subsequent release of bradykinin. Inhibits host factor XII and high molecular weight kininogen (KNG1) binding to negatively charged surfaces. Weakly inhibits the alternative pathway of complement system activation in the host. This Anopheles stephensi (Indo-Pakistan malaria mosquito) protein is gSG7 salivary protein.